Reading from the N-terminus, the 207-residue chain is MHAEEKLTAETFPAAPERNATLEGKNKFLGFWLFLGGETVLFASLFATYLALKDKTNGGPSAEELFQMPVVFMATMLLLTSSLTSVYAIYHMKNFDFKKMQLWFGITVLLGAGFLGLEIYEFNEYVHEGHKFTTSAFASAFYTLVGTHGSHVAFGLLWILTLMIRNAKRGLNLYNAPKFYVASLYWHFIDVVWVFIFTVVYLMGMVG.

Helical transmembrane passes span 28-48, 70-90, 102-122, 144-164, and 186-206; these read FLGF…LFAT, VVFM…YAIY, LWFG…IYEF, LVGT…TLMI, and WHFI…MGMV.

The protein belongs to the cytochrome c oxidase subunit 3 family.

It localises to the cell membrane. It catalyses the reaction 4 Fe(II)-[cytochrome c] + O2 + 8 H(+)(in) = 4 Fe(III)-[cytochrome c] + 2 H2O + 4 H(+)(out). This chain is Cytochrome c oxidase subunit 3 (ctaE), found in Bacillus sp. (strain PS3).